Consider the following 486-residue polypeptide: Glutamyl-tRNA(Gln) amidotransferase subunit A (486 aa).

Residues Lys-76 and Ser-151 each act as charge relay system in the active site. Catalysis depends on Ser-175, which acts as the Acyl-ester intermediate.

The protein belongs to the amidase family. GatA subfamily. As to quaternary structure, heterotrimer of A, B and C subunits.

It catalyses the reaction L-glutamyl-tRNA(Gln) + L-glutamine + ATP + H2O = L-glutaminyl-tRNA(Gln) + L-glutamate + ADP + phosphate + H(+). Its function is as follows. Allows the formation of correctly charged Gln-tRNA(Gln) through the transamidation of misacylated Glu-tRNA(Gln) in organisms which lack glutaminyl-tRNA synthetase. The reaction takes place in the presence of glutamine and ATP through an activated gamma-phospho-Glu-tRNA(Gln). The sequence is that of Glutamyl-tRNA(Gln) amidotransferase subunit A from Marinomonas sp. (strain MWYL1).